A 175-amino-acid chain; its full sequence is Apoptosis regulatory protein Siva (175 aa).

A Phosphotyrosine; by ABL2 modification is found at Y34. Residues 36-55 form an interaction with BCL2L1 isoform Bcl-x(L) and inhibition of BCL2L1 anti-apoptotic activity region; sequence QEVFEKTKRLLFLGAQAYLD. Position 70 is a phosphoserine (S70). The tract at residues 105–123 is interaction with coxsackievirus B3 VP2; that stretch reads DPSGVASIACSSCVRAVDG.

As to quaternary structure, binds through its N-terminal region to the C-terminus of CD27 and to PXMP2/PMP22. Binds to the C-terminus of TNFRSF18/GITR. Isoform 1 binds to BCL2L1/BCLX isoform Bcl-x(L) but not to BAX. In terms of assembly, (Microbial infection) Interacts with coxsackievirus B3 capsid protein VP2; this interaction inhibits the binding of SIVA1 to CD27. The cofactor is Zn(2+). In terms of processing, phosphorylated by ABL2/ARG in response to oxidative stress. In terms of tissue distribution, ubiquitous. Mostly expressed in thymus, testis, ovary, prostate, small intestine and spleen and less in colon.

Its subcellular location is the cytoplasm. The protein localises to the nucleus. In terms of biological role, induces CD27-mediated apoptosis. Inhibits BCL2L1 isoform Bcl-x(L) anti-apoptotic activity. Inhibits activation of NF-kappa-B and promotes T-cell receptor-mediated apoptosis. This is Apoptosis regulatory protein Siva (SIVA1) from Homo sapiens (Human).